We begin with the raw amino-acid sequence, 262 residues long: Imidazole glycerol phosphate synthase subunit HisF (262 aa).

Residues D11 and D130 contribute to the active site.

It belongs to the HisA/HisF family. As to quaternary structure, heterodimer of HisH and HisF.

It localises to the cytoplasm. The enzyme catalyses 5-[(5-phospho-1-deoxy-D-ribulos-1-ylimino)methylamino]-1-(5-phospho-beta-D-ribosyl)imidazole-4-carboxamide + L-glutamine = D-erythro-1-(imidazol-4-yl)glycerol 3-phosphate + 5-amino-1-(5-phospho-beta-D-ribosyl)imidazole-4-carboxamide + L-glutamate + H(+). Its pathway is amino-acid biosynthesis; L-histidine biosynthesis; L-histidine from 5-phospho-alpha-D-ribose 1-diphosphate: step 5/9. Its function is as follows. IGPS catalyzes the conversion of PRFAR and glutamine to IGP, AICAR and glutamate. The HisF subunit catalyzes the cyclization activity that produces IGP and AICAR from PRFAR using the ammonia provided by the HisH subunit. The chain is Imidazole glycerol phosphate synthase subunit HisF from Rhodopirellula baltica (strain DSM 10527 / NCIMB 13988 / SH1).